Here is a 254-residue protein sequence, read N- to C-terminus: Triosephosphate isomerase (254 aa).

12–14 (NWK) serves as a coordination point for substrate. Catalysis depends on His-99, which acts as the Electrophile. The Proton acceptor role is filled by Glu-169. Residues Gly-175, Ser-214, and 235–236 (GG) contribute to the substrate site.

Belongs to the triosephosphate isomerase family. Homodimer.

The protein resides in the cytoplasm. It carries out the reaction D-glyceraldehyde 3-phosphate = dihydroxyacetone phosphate. Its pathway is carbohydrate biosynthesis; gluconeogenesis. It functions in the pathway carbohydrate degradation; glycolysis; D-glyceraldehyde 3-phosphate from glycerone phosphate: step 1/1. Functionally, involved in the gluconeogenesis. Catalyzes stereospecifically the conversion of dihydroxyacetone phosphate (DHAP) to D-glyceraldehyde-3-phosphate (G3P). The polypeptide is Triosephosphate isomerase (Bartonella bacilliformis (strain ATCC 35685 / KC583 / Herrer 020/F12,63)).